A 639-amino-acid polypeptide reads, in one-letter code: Developmental regulatory protein wetA (639 aa).

Disordered regions lie at residues 65–97 (MDPS…EFDF), 206–369 (TTMR…SAAS), 418–552 (GLLI…SADE), and 587–613 (LMTG…RRRR). Over residues 69-78 (HHHHHPHHHA) the composition is skewed to basic residues. Composition is skewed to polar residues over residues 81–90 (ESSTTSSGVS) and 214–226 (VSQT…SPSM). Residues 246–255 (RGRRAHRAHT) are compositionally biased toward basic residues. 3 stretches are compositionally biased toward low complexity: residues 256–275 (QHAL…QAHQ), 346–369 (QQQW…SAAS), and 506–526 (HSSG…RVSV).

Belongs to the wetA family.

Its function is as follows. BrlA, abaA and wetA are pivotal regulators of conidiophore development and conidium maturation. They act individually and together to regulate their own expression and that of numerous other sporulation-specific genes. Acts as a crucial regulator of both conidiation capacity and conidial quality. Plays a role in virulence. This chain is Developmental regulatory protein wetA, found in Beauveria bassiana (strain ARSEF 2860) (White muscardine disease fungus).